The sequence spans 1229 residues: uncharacterized protein (1229 aa).

The N-terminal stretch at 1-19 (MKYFLLLFLLVLSFTLVES) is a signal peptide. Residues Asn-238, Asn-270, Asn-370, Asn-538, Asn-691, and Asn-701 are each glycosylated (N-linked (GlcNAc...) asparagine). The Galectin 1 domain maps to 678–813 (RMVNFANVME…QWNIDTVKMN (136 aa)). A compositionally biased stretch (polar residues) spans 818–829 (HTTTVEPSTPLE). Residues 818–903 (HTTTVEPSTP…TLPPTTTPYN (86 aa)) are disordered. A compositionally biased stretch (low complexity) spans 830 to 846 (TASTSQSTPSATLTSTT). Residues 847-869 (ENIPSTSKIPETSTTQRPTSPIL) are compositionally biased toward polar residues. Positions 870 to 901 (TSGATSTSSSTESTTTSPTTSTTTTLPPTTTP) are enriched in low complexity. Asn-903, Asn-938, and Asn-948 each carry an N-linked (GlcNAc...) asparagine glycan. The 135-residue stretch at 925 to 1059 (RPVVFSRYME…ESTIDTVSMA (135 aa)) folds into the Galectin 2 domain. Residues 1061–1087 (VRPPTTPTTTTSTTTTTTPKLTTTSTL) form a disordered region. The span at 1067–1087 (PTTTTSTTTTTTPKLTTTSTL) shows a compositional bias: low complexity. Residue Asn-1146 is glycosylated (N-linked (GlcNAc...) asparagine).

This is an uncharacterized protein from Caenorhabditis elegans.